A 314-amino-acid chain; its full sequence is Chitinase 1 (314 aa).

The signal sequence occupies residues 1 to 26 (MASVSPSSLLLLFFALLSPLLPLTSA). Residues 27–296 (LVFREYIGSQ…NVFRYEMQAQ (270 aa)) form the GH18 domain. Glu-151 serves as the catalytic Proton donor.

Belongs to the glycosyl hydrolase 18 family. Chitinase class II subfamily.

The catalysed reaction is Random endo-hydrolysis of N-acetyl-beta-D-glucosaminide (1-&gt;4)-beta-linkages in chitin and chitodextrins.. Functionally, able to cleave glycolchitin. This is Chitinase 1 from Tulipa saxatilis subsp. bakeri (Tulip).